A 228-amino-acid polypeptide reads, in one-letter code: MATWANLGLQNSSSPLMEQLNFFHDHTVLILIMITVMITYVMGMLFFNKFTNRYLLHGQTIEIIWTILPAIILMFIAFPSLRLLYLLDEINSPLITLKAIGHQWYWSYEYSNFMNLEFDSYMIPTNELDLNGFRLLDVDNRIILPLNNQIRILVTATDVLHSWTVPSLGVKIDATPGRLNQTNFLINQSGLFFGQCSEICGANHSFMPIVIESIPMNYFIKWVSSQLN.

Topologically, residues 1–26 (MATWANLGLQNSSSPLMEQLNFFHDH) are mitochondrial intermembrane. The chain crosses the membrane as a helical span at residues 27-48 (TVLILIMITVMITYVMGMLFFN). The Mitochondrial matrix segment spans residues 49–62 (KFTNRYLLHGQTIE). The chain crosses the membrane as a helical span at residues 63-82 (IIWTILPAIILMFIAFPSLR). Residues 83–228 (LLYLLDEINS…FIKWVSSQLN (146 aa)) are Mitochondrial intermembrane-facing. Cu cation-binding residues include His-161, Cys-196, Glu-198, Cys-200, His-204, and Met-207. A Mg(2+)-binding site is contributed by Glu-198.

This sequence belongs to the cytochrome c oxidase subunit 2 family. Component of the cytochrome c oxidase (complex IV, CIV), a multisubunit enzyme composed of a catalytic core of 3 subunits and several supernumerary subunits. The complex exists as a monomer or a dimer and forms supercomplexes (SCs) in the inner mitochondrial membrane with ubiquinol-cytochrome c oxidoreductase (cytochrome b-c1 complex, complex III, CIII). Requires Cu cation as cofactor.

The protein localises to the mitochondrion inner membrane. It carries out the reaction 4 Fe(II)-[cytochrome c] + O2 + 8 H(+)(in) = 4 Fe(III)-[cytochrome c] + 2 H2O + 4 H(+)(out). Component of the cytochrome c oxidase, the last enzyme in the mitochondrial electron transport chain which drives oxidative phosphorylation. The respiratory chain contains 3 multisubunit complexes succinate dehydrogenase (complex II, CII), ubiquinol-cytochrome c oxidoreductase (cytochrome b-c1 complex, complex III, CIII) and cytochrome c oxidase (complex IV, CIV), that cooperate to transfer electrons derived from NADH and succinate to molecular oxygen, creating an electrochemical gradient over the inner membrane that drives transmembrane transport and the ATP synthase. Cytochrome c oxidase is the component of the respiratory chain that catalyzes the reduction of oxygen to water. Electrons originating from reduced cytochrome c in the intermembrane space (IMS) are transferred via the dinuclear copper A center (CU(A)) of subunit 2 and heme A of subunit 1 to the active site in subunit 1, a binuclear center (BNC) formed by heme A3 and copper B (CU(B)). The BNC reduces molecular oxygen to 2 water molecules using 4 electrons from cytochrome c in the IMS and 4 protons from the mitochondrial matrix. This Culex quinquefasciatus (Southern house mosquito) protein is Cytochrome c oxidase subunit 2 (COII).